The primary structure comprises 216 residues: Imidazoleglycerol-phosphate dehydratase (216 aa).

S211 is subject to Phosphoserine.

It belongs to the imidazoleglycerol-phosphate dehydratase family.

The enzyme catalyses D-erythro-1-(imidazol-4-yl)glycerol 3-phosphate = 3-(imidazol-4-yl)-2-oxopropyl phosphate + H2O. It functions in the pathway amino-acid biosynthesis; L-histidine biosynthesis; L-histidine from 5-phospho-alpha-D-ribose 1-diphosphate: step 6/9. This Schizosaccharomyces pombe (strain 972 / ATCC 24843) (Fission yeast) protein is Imidazoleglycerol-phosphate dehydratase (his5).